The sequence spans 118 residues: Protein TusC (118 aa).

This sequence belongs to the DsrF/TusC family. Heterohexamer, formed by a dimer of trimers. The hexameric TusBCD complex contains 2 copies each of TusB, TusC and TusD. The TusBCD complex interacts with TusE.

Its subcellular location is the cytoplasm. In terms of biological role, part of a sulfur-relay system required for 2-thiolation of 5-methylaminomethyl-2-thiouridine (mnm(5)s(2)U) at tRNA wobble positions. The polypeptide is Protein TusC (Salmonella agona (strain SL483)).